The following is a 719-amino-acid chain: Disintegrin and metalloproteinase domain-containing protein 18 (719 aa).

An N-terminal signal peptide occupies residues 1 to 19 (MPLLFILAELAMLFARLDS). A propeptide spanning residues 20–179 (EGICLHITVP…QDKNHSQLLP (160 aa)) is cleaved from the precursor. N-linked (GlcNAc...) asparagine glycans are attached at residues Asn61, Asn75, Asn121, Asn152, Asn173, Asn244, and Asn331. The Extracellular portion of the chain corresponds to 173-683 (NHSQLLPQSL…TKRLSKNEDS (511 aa)). Residues 180–378 (QSLKLHIIVG…FDTQCLGDLS (199 aa)) enclose the Peptidase M12B domain. 3 disulfides stabilise this stretch: Cys289-Cys373, Cys332-Cys357, and Cys334-Cys339. Asn356 and Asn405 each carry an N-linked (GlcNAc...) asparagine glycan. The Disintegrin domain occupies 387–476 (QAVCGNGIME…HCVPDTFALN (90 aa)). Cysteines 447 and 468 form a disulfide. N-linked (GlcNAc...) asparagine glycosylation is found at Asn607, Asn614, and Asn621. Residues 616–650 (TGNDCNATKKCKGNGICNNFGNCQCFPDYRPPDCN) enclose the EGF-like domain. 3 disulfide bridges follow: Cys620-Cys632, Cys626-Cys638, and Cys640-Cys649. A helical membrane pass occupies residues 684–704 (WVILGFFIFLPFIVTFLVGIM). At 705-719 (KRNERKIVPQGEHKI) the chain is on the cytoplasmic side.

Post-translationally, the prodomain and the metalloprotease-like domain are cleaved during the epididymal maturation of the spermatozoa. Expressed specifically in testis.

It localises to the membrane. Its function is as follows. Sperm surface membrane protein that may be involved in spermatogenesis and fertilization. This is a non catalytic metalloprotease-like protein. The sequence is that of Disintegrin and metalloproteinase domain-containing protein 18 (Adam18) from Mus musculus (Mouse).